Here is a 312-residue protein sequence, read N- to C-terminus: Chorismate mutase 1, chloroplastic (312 aa).

A chloroplast-targeting transit peptide spans Met-1–Arg-44. The interval Ala-16 to Arg-58 is disordered. L-phenylalanine-binding positions include Arg-58 and Asn-190–Ser-193. L-tyrosine-binding positions include Arg-58 and Asn-190–Ser-193. In terms of domain architecture, Chorismate mutase spans Arg-58–Asp-312.

As to quaternary structure, homodimer. Interacts with Cmu1 of the fungal pathogen Ustilago maydis.

The protein localises to the plastid. Its subcellular location is the chloroplast. It catalyses the reaction chorismate = prephenate. It participates in metabolic intermediate biosynthesis; prephenate biosynthesis; prephenate from chorismate: step 1/1. Its activity is regulated as follows. Allosterically inhibited by tyrosine and phenylalanine. Activated by tryptophan. May play a role in chloroplast biogenesis. This chain is Chorismate mutase 1, chloroplastic, found in Zea mays (Maize).